The chain runs to 77 residues: MMFTPLIVLTLLVLATAEHQCGPNEQWSDCPGCELQCGESDKPCPAMCGDPKCYCSPDQYRRIPDGRCIRKIQCPQH.

Positions 1–17 are cleaved as a signal peptide; the sequence is MMFTPLIVLTLLVLATA. 5 disulfide bridges follow: Cys-21-Cys-53, Cys-30-Cys-48, Cys-33-Cys-44, Cys-37-Cys-74, and Cys-55-Cys-68. Residues 21–74 enclose the TIL domain; it reads CGPNEQWSDCPGCELQCGESDKPCPAMCGDPKCYCSPDQYRRIPDGRCIRKIQC.

Its subcellular location is the secreted. Functionally, defends the organism against the host's proteinases. This is Serine protease inhibitor 1 from Anisakis simplex (Herring worm).